The chain runs to 202 residues: LexA repressor (202 aa).

The H-T-H motif DNA-binding region spans 27-47 (RAEIAAELGFRSANAAEEHLR). Catalysis depends on for autocatalytic cleavage activity residues Ser119 and Lys156.

The protein belongs to the peptidase S24 family. Homodimer.

It catalyses the reaction Hydrolysis of Ala-|-Gly bond in repressor LexA.. In terms of biological role, represses a number of genes involved in the response to DNA damage (SOS response), including recA and lexA. In the presence of single-stranded DNA, RecA interacts with LexA causing an autocatalytic cleavage which disrupts the DNA-binding part of LexA, leading to derepression of the SOS regulon and eventually DNA repair. This Marinobacter nauticus (strain ATCC 700491 / DSM 11845 / VT8) (Marinobacter aquaeolei) protein is LexA repressor.